A 133-amino-acid chain; its full sequence is UPF0134 protein MPN_151 (133 aa).

Belongs to the UPF0134 family.

The polypeptide is UPF0134 protein MPN_151 (Mycoplasma pneumoniae (strain ATCC 29342 / M129 / Subtype 1) (Mycoplasmoides pneumoniae)).